The chain runs to 474 residues: Serine/threonine-protein kinase VRK3 (474 aa).

Positions 41–58 (HVSSFQGSKRGLNSSFET) are enriched in polar residues. The disordered stretch occupies residues 41 to 152 (HVSSFQGSKR…SRVTTSLEAL (112 aa)). Positions 49–64 (KRGLNSSFETSPKKVK) match the Nuclear localization signal motif. Phosphoserine occurs at positions 54, 55, 59, 82, 83, and 90. The span at 88 to 101 (TLSSSERSKGSGSR) shows a compositional bias: low complexity. Residues 107-149 (SSPQKTRKSPQVTRGSPQKTSCSPQKTRQSPQTLKRSRVTTSL) show a composition bias toward polar residues. Ser108 carries the post-translational modification Phosphoserine; by CDK5. A phosphoserine mark is found at Ser115 and Ser122. The Protein kinase domain maps to 166–457 (WKLKSFQTRD…MLRNNLEALL (292 aa)).

The protein belongs to the protein kinase superfamily. CK1 Ser/Thr protein kinase family. VRK subfamily. Interacts with DUSP3. Interacts with RAN. Interacts with HSP70/HSPA1A. In terms of processing, phosphorylated at Ser-108 by CDK5; leading to protection of the cell against H2O2-induced apoptosis. Ubiquitinated by RNF144A.

The protein localises to the nucleus. It localises to the cytoplasm. The enzyme catalyses L-seryl-[protein] + ATP = O-phospho-L-seryl-[protein] + ADP + H(+). Plays a role in the regulation of the cell cycle by phosphorylating the nuclear envelope protein barrier-to-autointegration factor/BAF that is required for disassembly and reassembly, respectively, of the nuclear envelope during mitosis. Under normal physiological conditions, negatively regulates ERK activity along with VHR/DUSP3 phosphatase in the nucleus, causing timely and transient action of ERK. Stress conditions activate CDK5 which phosphorylates VRK3 to increase VHR phosphatase activity and suppress prolonged ERK activation that causes cell death. For example, upon glutamate induction, promotes nuclear localization of HSP70/HSPA1A to inhibit ERK activation via VHR/DUSP3 phosphatase. The chain is Serine/threonine-protein kinase VRK3 (VRK3) from Homo sapiens (Human).